A 180-amino-acid chain; its full sequence is Large ribosomal subunit protein uL6 (180 aa).

It belongs to the universal ribosomal protein uL6 family. Part of the 50S ribosomal subunit.

In terms of biological role, this protein binds to the 23S rRNA, and is important in its secondary structure. It is located near the subunit interface in the base of the L7/L12 stalk, and near the tRNA binding site of the peptidyltransferase center. This is Large ribosomal subunit protein uL6 from Thermus aquaticus.